Here is a 125-residue protein sequence, read N- to C-terminus: MORF4 family-associated protein 1 (125 aa).

Residues Glu76–Asp99 are disordered. The stretch at Arg94–Ser124 forms a coiled coil.

It belongs to the MORF4 family-associated protein family. In terms of assembly, found in a complex composed of MORF4L1, MRFAP1 and RB1. Interacts via its N-terminus with MORF4L1. Interacts with CSTB and MORF4L2. In terms of tissue distribution, widely expressed in all tissues examined and as early as 7 days during embryonic development.

The protein resides in the nucleus. Its subcellular location is the cytoplasm. The protein localises to the perinuclear region. The chain is MORF4 family-associated protein 1 from Mus musculus (Mouse).